Consider the following 305-residue polypeptide: Phosphoribosylaminoimidazole-succinocarboxamide synthase (305 aa).

It belongs to the SAICAR synthetase family.

The enzyme catalyses 5-amino-1-(5-phospho-D-ribosyl)imidazole-4-carboxylate + L-aspartate + ATP = (2S)-2-[5-amino-1-(5-phospho-beta-D-ribosyl)imidazole-4-carboxamido]succinate + ADP + phosphate + 2 H(+). It participates in purine metabolism; IMP biosynthesis via de novo pathway; 5-amino-1-(5-phospho-D-ribosyl)imidazole-4-carboxamide from 5-amino-1-(5-phospho-D-ribosyl)imidazole-4-carboxylate: step 1/2. The polypeptide is Phosphoribosylaminoimidazole-succinocarboxamide synthase (Tropheryma whipplei (strain Twist) (Whipple's bacillus)).